Here is a 1518-residue protein sequence, read N- to C-terminus: Putative cellulose synthase 2 (1518 aa).

The catalytic stretch occupies residues 1-731 (MYGTWFTTGK…EEKLEKQSFV (731 aa)). Helical transmembrane passes span 24 to 44 (PVWV…SVRI), 71 to 91 (ITVF…VWRL), and 105 to 125 (LAVL…LSYF). The segment at 144–237 (QWPSVDVFVP…FAVIFDCDHV (94 aa)) is catalytic subdomain A. The active site involves aspartate 186. 2 residues coordinate substrate: aspartate 233 and aspartate 235. The tract at residues 314-374 (EAVMGIGGFA…GQRVRWARGM (61 aa)) is catalytic subdomain B. Residue aspartate 330 is part of the active site. 5 helical membrane-spanning segments follow: residues 404-424 (FLFA…LFLG), 427-447 (IIAA…FHSV), 465-485 (IYET…LLQP), 514-534 (ILAG…VWQF), and 543-563 (FILN…SIAV). Residues 569–668 (QTRNAPRVSV…ERQVVSMVFG (100 aa)) enclose the PilZ domain. Residues 732–1518 (LKPVPRSARH…IARDDLTGEL (787 aa)) form a cyclic di-GMP binding domain region. A disordered region spans residues 765–785 (APSPDQSGVTAETPFGDSNTG). The segment covering 768–785 (PDQSGVTAETPFGDSNTG) has biased composition (polar residues). The helical transmembrane segment at 1481–1501 (ALYLAGLAGAGLAALGVWAWL) threads the bilayer.

It in the N-terminal section; belongs to the glycosyltransferase 2 family. In the C-terminal section; belongs to the AcsB/BcsB family.

The protein resides in the cell inner membrane. It carries out the reaction [(1-&gt;4)-beta-D-glucosyl](n) + UDP-alpha-D-glucose = [(1-&gt;4)-beta-D-glucosyl](n+1) + UDP + H(+). It functions in the pathway glycan metabolism; bacterial cellulose biosynthesis. The polypeptide is Putative cellulose synthase 2 (bcsABII-A) (Komagataeibacter xylinus (Gluconacetobacter xylinus)).